Reading from the N-terminus, the 425-residue chain is Dual-specificity RNA methyltransferase RlmN (425 aa).

Residue Glu136 is the Proton acceptor of the active site. Residues 142 to 381 (GDDRGTLCVS…FTAGYASPVR (240 aa)) form the Radical SAM core domain. A disulfide bridge links Cys149 with Cys392. [4Fe-4S] cluster is bound by residues Cys156, Cys160, and Cys163. S-adenosyl-L-methionine contacts are provided by residues 218–219 (GE), Ser250, 272–274 (SLH), and Asn349. Catalysis depends on Cys392, which acts as the S-methylcysteine intermediate.

The protein belongs to the radical SAM superfamily. RlmN family. It depends on [4Fe-4S] cluster as a cofactor.

It localises to the cytoplasm. It catalyses the reaction adenosine(2503) in 23S rRNA + 2 reduced [2Fe-2S]-[ferredoxin] + 2 S-adenosyl-L-methionine = 2-methyladenosine(2503) in 23S rRNA + 5'-deoxyadenosine + L-methionine + 2 oxidized [2Fe-2S]-[ferredoxin] + S-adenosyl-L-homocysteine. The catalysed reaction is adenosine(37) in tRNA + 2 reduced [2Fe-2S]-[ferredoxin] + 2 S-adenosyl-L-methionine = 2-methyladenosine(37) in tRNA + 5'-deoxyadenosine + L-methionine + 2 oxidized [2Fe-2S]-[ferredoxin] + S-adenosyl-L-homocysteine. Functionally, specifically methylates position 2 of adenine 2503 in 23S rRNA and position 2 of adenine 37 in tRNAs. m2A2503 modification seems to play a crucial role in the proofreading step occurring at the peptidyl transferase center and thus would serve to optimize ribosomal fidelity. This Methylorubrum extorquens (strain PA1) (Methylobacterium extorquens) protein is Dual-specificity RNA methyltransferase RlmN.